A 262-amino-acid chain; its full sequence is MSSGLYSMEKKEFDKVLDLERVKPYGDTMNDGKVQLSFTLPLKNNERSAEAAKQIALKMGLEEPSVVMQQSLDEEFTFFVVYGNFVQSVNYNEIHVEAVNSEILSMEETDEYIKENIGRKIVVVGASTGTDAHTVGIDAIMNMKGYAGHYGLERYEMIDAYNLGSQVANEDFIKKAVELEADVLLVSQTVTQKNVHIQNMTHLIELLEAEGLRDRFVLLCGGPRINNEIAKELGYDAGFGPGRFADDVATFAVKTLNDRMNS.

The region spanning 120–262 is the B12-binding domain; sequence KIVVVGASTG…VKTLNDRMNS (143 aa). Adenosylcob(III)alamin-binding positions include 130 to 136 and His-133; that span reads TDAHTVG. N6-(pyridoxal phosphate)lysine is present on Lys-144. Residues 185-192, 219-223, and 239-244 each bind adenosylcob(III)alamin; these read LVSQTVTQ, LCGGP, and FGPGRF.

The protein belongs to the KamE family. As to quaternary structure, heterotetramer of 2 alpha and 2 beta subunits. Requires adenosylcob(III)alamin as cofactor. Pyridoxal 5'-phosphate serves as cofactor.

It catalyses the reaction (3S)-3,6-diaminohexanoate = (3S,5S)-3,5-diaminohexanoate. The enzyme catalyses D-lysine = (2R,5S)-2,5-diaminohexanoate. It participates in amino-acid metabolism; lysine degradation. With respect to regulation, rapidly inactivated in the presence of D-lysine and to a lesser extent in the absence of adenosylcobalamin (Adocbl). Activity is stable in the presence of Adocbl when D-lysine is absent. Adocbl imparts thermal stability at 37 degrees Celsius. In terms of biological role, catalyzes the migration of the L-beta-lysine and D-lysine epsilon amino group to the delta carbon to produce 3,5-diaminohexanoate and 2,5-diaminohexanoate, respectively. The chain is Lysine 5,6-aminomutase beta subunit (kamE) from Acetoanaerobium sticklandii (strain ATCC 12662 / DSM 519 / JCM 1433 / CCUG 9281 / NCIMB 10654 / HF) (Clostridium sticklandii).